A 48-amino-acid chain; its full sequence is Protein YgdT (48 aa).

The polypeptide is Protein YgdT (ygdT) (Escherichia coli (strain K12)).